Consider the following 78-residue polypeptide: Large ribosomal subunit protein bL31 (78 aa).

The Zn(2+) site is built by cysteine 16, cysteine 18, cysteine 38, and cysteine 41.

This sequence belongs to the bacterial ribosomal protein bL31 family. Type A subfamily. As to quaternary structure, part of the 50S ribosomal subunit. The cofactor is Zn(2+).

Functionally, binds the 23S rRNA. The protein is Large ribosomal subunit protein bL31 of Frankia alni (strain DSM 45986 / CECT 9034 / ACN14a).